The primary structure comprises 674 residues: Early transcription factor 70 kDa subunit (674 aa).

The 160-residue stretch at 34 to 193 folds into the Helicase ATP-binding domain; it reads ERSLKEKKSV…KDIVELLTNE (160 aa). Residue 45 to 52 participates in ATP binding; it reads LFHKMGSG. The DEXH box motif lies at 135–138; that stretch reads YDNY.

This sequence belongs to the helicase family. VETF subfamily. Heterodimer of a 70 kDa and a 82 kDa subunit. Part of the early transcription complex composed of ETF, RAP94, and the DNA-directed RNA polymerase.

It is found in the virion. Acts with RNA polymerase to initiate transcription from early gene promoters. Is recruited by the RPO-associated protein of 94 kDa (RAP94) to form the early transcription complex, which also contains the core RNA polymerase. ETF heterodimer binds to early gene promoters. The protein is Early transcription factor 70 kDa subunit (VETFS) of Melanoplus sanguinipes entomopoxvirus (MsEPV).